Here is a 146-residue protein sequence, read N- to C-terminus: Angiogenin (146 aa).

A signal peptide spans 1–24; that stretch reads MVMGLHLLLLVFILGLGLTPPTLA. Residue Gln25 is modified to Pyrrolidone carboxylic acid. His37 serves as the catalytic Proton acceptor. Intrachain disulfides connect Cys50–Cys105, Cys63–Cys116, and Cys81–Cys131. The Nucleolar localization signal signature appears at 55-59; the sequence is RLRNM. Residue Cys105 coordinates tRNA. His138 serves as the catalytic Proton donor.

Belongs to the pancreatic ribonuclease family. Homodimer. Interacts with RNH1; inhibiting ANG ribonuclease activity. Interacts with PCNA.

It is found in the secreted. The protein resides in the nucleus. The protein localises to the nucleolus. Its subcellular location is the cytoplasm. It localises to the stress granule. Has weak tRNA ribonuclease activity by itself due to partial autoinhibition by its C-terminus, which folds into a short alpha-helix that partially occludes the substrate-binding site. In absence of stress, the ribonuclease activity is inhibited by RNH1 in the cytoplasm. In response to stress, dissociates from RNH1 in the cytoplasm and associates with cytoplasmic ribosomes with vacant A-sites: ribosomes directly activate the tRNA ribonuclease activity of ANG by refolding the C-terminal alpha-helix. In response to stress, the angiogenic activity of ANG is inhibited by RNH1 in the nucleus. In terms of biological role, secreted ribonuclease that can either promote or restrict cell proliferation of target cells, depending on the context. Endocytosed in target cells via its receptor PLXNB2 and translocates to the cytoplasm or nucleus. Under stress conditions, localizes to the cytoplasm and promotes the assembly of stress granules (SGs): specifically cleaves a subset of tRNAs within anticodon loops to produce tRNA-derived stress-induced fragments (tiRNAs), resulting in translation repression and inhibition of cell proliferation. tiRNas also prevent formation of apoptosome, thereby promoting cell survival. Preferentially cleaves RNAs between a pyrimidine and an adenosine residue, suggesting that it cleaves the anticodon loop of tRNA(Ala) (32-UUAGCAU-38) after positions 33 and 36. Cleaves a subset of tRNAs, including tRNA(Ala), tRNA(Glu), tRNA(Gly), tRNA(Lys), tRNA(Val), tRNA(His), tRNA(Asp) and tRNA(Sec). Under growth conditions and in differentiated cells, translocates to the nucleus and stimulates ribosomal RNA (rRNA) transcription, including that containing the initiation site sequences of 45S rRNA, thereby promoting cell growth and proliferation. Angiogenin induces vascularization of normal and malignant tissues via its ability to promote rRNA transcription. Involved in hematopoietic stem and progenitor cell (HSPC) growth and survival by promoting rRNA transcription in growth conditions and inhibiting translation in response to stress, respectively. Mediates the crosstalk between myeloid and intestinal epithelial cells to protect the intestinal epithelial barrier integrity: secreted by myeloid cells and promotes intestinal epithelial cells proliferation and survival. Also mediates osteoclast-endothelial cell crosstalk in growing bone: produced by osteoclasts and protects the neighboring vascular cells against senescence by promoting rRNA transcription. This Aotus trivirgatus (Three-striped night monkey) protein is Angiogenin (ANG).